The primary structure comprises 808 residues: Probable inorganic carbon transporter subunit DabA (808 aa).

Zn(2+) is bound by residues Cys-334, Asp-336, His-494, and Cys-509.

It belongs to the inorganic carbon transporter (TC 9.A.2) DabA family. In terms of assembly, forms a complex with DabB. Zn(2+) is required as a cofactor.

The protein localises to the cell inner membrane. Part of an energy-coupled inorganic carbon pump. This chain is Probable inorganic carbon transporter subunit DabA, found in Allorhizobium ampelinum (strain ATCC BAA-846 / DSM 112012 / S4) (Agrobacterium vitis (strain S4)).